Reading from the N-terminus, the 135-residue chain is ATP synthase epsilon chain (135 aa).

It belongs to the ATPase epsilon chain family. As to quaternary structure, F-type ATPases have 2 components, CF(1) - the catalytic core - and CF(0) - the membrane proton channel. CF(1) has five subunits: alpha(3), beta(3), gamma(1), delta(1), epsilon(1). CF(0) has three main subunits: a, b and c.

It localises to the cell inner membrane. Functionally, produces ATP from ADP in the presence of a proton gradient across the membrane. In Rhodopseudomonas palustris (strain ATCC BAA-98 / CGA009), this protein is ATP synthase epsilon chain.